A 485-amino-acid chain; its full sequence is ATP synthase subunit beta (485 aa).

Basic and acidic residues predominate over residues 1 to 11; sequence MPATETADKNT. Residues 1–20 are disordered; sequence MPATETADKNTKSANSDTSG. Residue 170–177 participates in ATP binding; sequence GGAGVGKT.

The protein belongs to the ATPase alpha/beta chains family. In terms of assembly, F-type ATPases have 2 components, CF(1) - the catalytic core - and CF(0) - the membrane proton channel. CF(1) has five subunits: alpha(3), beta(3), gamma(1), delta(1), epsilon(1). CF(0) has three main subunits: a(1), b(2) and c(9-12). The alpha and beta chains form an alternating ring which encloses part of the gamma chain. CF(1) is attached to CF(0) by a central stalk formed by the gamma and epsilon chains, while a peripheral stalk is formed by the delta and b chains.

It is found in the cell membrane. The catalysed reaction is ATP + H2O + 4 H(+)(in) = ADP + phosphate + 5 H(+)(out). Produces ATP from ADP in the presence of a proton gradient across the membrane. The catalytic sites are hosted primarily by the beta subunits. The polypeptide is ATP synthase subunit beta (Mycolicibacterium paratuberculosis (strain ATCC BAA-968 / K-10) (Mycobacterium paratuberculosis)).